The chain runs to 248 residues: 1-(5-phosphoribosyl)-5-[(5-phosphoribosylamino)methylideneamino] imidazole-4-carboxamide isomerase (248 aa).

The Proton acceptor role is filled by Asp8. Asp131 serves as the catalytic Proton donor.

This sequence belongs to the HisA/HisF family.

Its subcellular location is the cytoplasm. The enzyme catalyses 1-(5-phospho-beta-D-ribosyl)-5-[(5-phospho-beta-D-ribosylamino)methylideneamino]imidazole-4-carboxamide = 5-[(5-phospho-1-deoxy-D-ribulos-1-ylimino)methylamino]-1-(5-phospho-beta-D-ribosyl)imidazole-4-carboxamide. The protein operates within amino-acid biosynthesis; L-histidine biosynthesis; L-histidine from 5-phospho-alpha-D-ribose 1-diphosphate: step 4/9. The protein is 1-(5-phosphoribosyl)-5-[(5-phosphoribosylamino)methylideneamino] imidazole-4-carboxamide isomerase of Cupriavidus necator (strain ATCC 17699 / DSM 428 / KCTC 22496 / NCIMB 10442 / H16 / Stanier 337) (Ralstonia eutropha).